Reading from the N-terminus, the 364-residue chain is Acidic fibroblast growth factor intracellular-binding protein (364 aa).

At Thr-2 the chain carries N-acetylthreonine.

Binds to internalized FGF1; this interaction is increased in the presence of CSNKB, suggesting a possible cooperative interaction between CSNKB and FIBP in binding to FGF1. Highly expressed in heart, skeletal muscle and pancreas. Expressed at lower levels in brain. Also found in placenta, liver and kidney.

It localises to the nucleus. It is found in the endomembrane system. Functionally, may be involved in mitogenic function of FGF1. May mediate with IER2 FGF-signaling in the establishment of laterality in the embryo. The chain is Acidic fibroblast growth factor intracellular-binding protein (FIBP) from Homo sapiens (Human).